The following is an 882-amino-acid chain: DNA polymerase 1 (882 aa).

Residues 1 to 31 form a disordered region; the sequence is MTKQLTLFDIPSSKPAKSEQNTQQSQQSAPV. Positions 18-29 are enriched in polar residues; that stretch reads SEQNTQQSQQSA.

It belongs to the DNA polymerase type-B family. Interacts with PCNA subunit PCNA2 and weakly with PCNA3.

It carries out the reaction DNA(n) + a 2'-deoxyribonucleoside 5'-triphosphate = DNA(n+1) + diphosphate. DNA synthesis is stimulated by PCNA heterotrimers. This polymerase possesses two enzymatic activities: DNA synthesis (polymerase) and an exonucleolytic activity that degrades single-stranded DNA in the 3'- to 5'-direction. DNA polymerase I, DNA ligase and the flap endonuclease may be constitutively associated with the PCNA heterotrimer forming a scanning complex able to couple DNA synthesis and Okazaki fragment maturation. The chain is DNA polymerase 1 (dpo1) from Saccharolobus solfataricus (strain ATCC 35092 / DSM 1617 / JCM 11322 / P2) (Sulfolobus solfataricus).